A 459-amino-acid polypeptide reads, in one-letter code: tRNA modification GTPase MnmE (459 aa).

Residues Arg29, Glu86, and Lys125 each contribute to the (6S)-5-formyl-5,6,7,8-tetrahydrofolate site. One can recognise a TrmE-type G domain in the interval 221 to 382 (GMNVVIAGRP…LTEHLKAVMG (162 aa)). Asn231 contacts K(+). Residues 231–236 (NAGKSS), 250–256 (TNIEGTT), and 275–278 (DTAG) contribute to the GTP site. Residue Ser235 participates in Mg(2+) binding. K(+) is bound by residues Thr250, Ile252, and Thr255. Thr256 contacts Mg(2+). Residue Lys459 coordinates (6S)-5-formyl-5,6,7,8-tetrahydrofolate.

Belongs to the TRAFAC class TrmE-Era-EngA-EngB-Septin-like GTPase superfamily. TrmE GTPase family. Homodimer. Heterotetramer of two MnmE and two MnmG subunits. K(+) is required as a cofactor.

The protein resides in the cytoplasm. Functionally, exhibits a very high intrinsic GTPase hydrolysis rate. Involved in the addition of a carboxymethylaminomethyl (cmnm) group at the wobble position (U34) of certain tRNAs, forming tRNA-cmnm(5)s(2)U34. The polypeptide is tRNA modification GTPase MnmE (Marinomonas sp. (strain MWYL1)).